Reading from the N-terminus, the 463-residue chain is Hydroxyacid-oxoacid transhydrogenase, mitochondrial (463 aa).

It belongs to the iron-containing alcohol dehydrogenase family. Hydroxyacid-oxoacid transhydrogenase subfamily.

Its subcellular location is the mitochondrion. The enzyme catalyses (S)-3-hydroxybutanoate + 2-oxoglutarate = (R)-2-hydroxyglutarate + acetoacetate. It catalyses the reaction 4-hydroxybutanoate + 2-oxoglutarate = (R)-2-hydroxyglutarate + succinate semialdehyde. Functionally, catalyzes the cofactor-independent reversible oxidation of gamma-hydroxybutyrate (GHB) to succinic semialdehyde (SSA) coupled to reduction of 2-ketoglutarate (2-KG) to D-2-hydroxyglutarate (D-2-HG). L-3-hydroxybutyrate (L-3-OHB) is also a substrate for HOT when using 2-KG as hydrogen acceptor, resulting in the formation of D-2-HG. The chain is Hydroxyacid-oxoacid transhydrogenase, mitochondrial (adhfe1) from Xenopus laevis (African clawed frog).